Reading from the N-terminus, the 297-residue chain is Cell death peptidase (297 aa).

Helical transmembrane passes span 61-82 (IVLTVASLEYIWAFSNFFWVFT) and 149-178 (IFLCAIAWILHHEISHVVLQHPLVTTAFST).

The protein belongs to the peptidase U49 family.

Its subcellular location is the cell membrane. Functionally, interacts with a short DNA sequence about one-quarter of the way into the major capsid protein gene 23 of T4; general translation inhibition occurs when this late gene of the virus is expressed. This is Cell death peptidase (lit) from Escherichia coli (strain K12).